Here is a 327-residue protein sequence, read N- to C-terminus: Ribonucleoside-diphosphate reductase small chain (327 aa).

Aspartate 70, glutamate 101, and histidine 104 together coordinate Fe cation. The active site involves tyrosine 108. Glutamate 164, glutamate 198, and histidine 201 together coordinate Fe cation.

This sequence belongs to the ribonucleoside diphosphate reductase small chain family. As to quaternary structure, heterotetramer composed of a homodimer of the large subunit (R1) and a homodimer of the small subunit (R2). Larger multisubunit protein complex are also active, composed of (R1)n(R2)n. It depends on Fe cation as a cofactor.

It catalyses the reaction a 2'-deoxyribonucleoside 5'-diphosphate + [thioredoxin]-disulfide + H2O = a ribonucleoside 5'-diphosphate + [thioredoxin]-dithiol. Functionally, ribonucleoside-diphosphate reductase holoenzyme provides the precursors necessary for viral DNA synthesis. Allows virus growth in non-dividing cells. Catalyzes the biosynthesis of deoxyribonucleotides from the corresponding ribonucleotides. The sequence is that of Ribonucleoside-diphosphate reductase small chain from Ornithodoros (relapsing fever ticks).